A 577-amino-acid polypeptide reads, in one-letter code: MFS-type transporter CPUR_05422 (577 aa).

Residues 1-49 (MSAMSAMGKPEHGSATTSDLEHRATESSLEKQDVEAAPPGPVKPVDPSP) are disordered. Positions 19–34 (DLEHRATESSLEKQDV) are enriched in basic and acidic residues. The span at 38-47 (PPGPVKPVDP) shows a compositional bias: pro residues. A run of 14 helical transmembrane segments spans residues 52–72 (STLK…LVAV), 93–113 (DVGW…LLFG), 123–143 (VVLL…GAAP), 157–177 (VGSA…IPLA), 184–204 (GLMG…GGAF), 212–232 (WCFY…FFYF), 249–269 (ILSL…CLLL), 285–305 (IIVL…VQIC), 326–346 (FLTT…IPIW), 359–379 (GIQL…GGLL), 383–403 (IGYY…GAGL), 416–436 (VIGY…TPNL), 449–469 (MGIA…VAVG), and 525–545 (VFIV…CMEW). Residues 554–577 (PPAGPPAGAPTESAPVETKAAGHT) are disordered.

It belongs to the major facilitator superfamily. TCR/Tet family.

The protein resides in the membrane. Functionally, MFS-type transporter; part of the ergochrome gene cluster responsible for the typical purple-black color of the ergot sclerotia. The ergochrome gene cluster produces several ergot pigments including the yellow ergochrome secalonic acid and its derivatives, as well as the red anthraquinones endocrocin and clavorubin. This chain is MFS-type transporter CPUR_05422, found in Claviceps purpurea (strain 20.1) (Ergot fungus).